The chain runs to 473 residues: MIQRRRPVPFELGPVHFIGIGGIGMSGIAEIMIRIGYTVQGSDAKASANTERLEKLGARIFIGHDAAHVEGASAIVYSTAVKADNPEMVAGRDKRLPLVRRAEMLAELMRLQFSVAVGGTHGKTTTTSMVAALLDAGGLDPTVVNGGIINAYGTNAKVGEGDWIVVEADESDGSFLKLKSTVAIVTNIDAEHLDHWGDFDAVKKGFQDFIQNIPFYGFAAVCTDHPEVQALTSRIENRRLVTYGTNPQAEVRVSNIEMGPEGATFDIIVSPRAGEAVRYDGLKMPMAGHHNVLNATAAVAVARELGVDAEAIAKGLAGFGGVKRRFTTTGVANGIRVVDDYGHHPVEIAAVLKAARAVTPNGKVIAVVQPHRFTRLRDLMTEFSSCFNDADTVIVADVYTAGEQPIPGVDRDALVAGLKKFGHRRALPLENPTALPRLIAAEATSGDLVVLLGAGDITTWSYALPGQLEALTK.

119-125 (GTHGKTT) contributes to the ATP binding site.

The protein belongs to the MurCDEF family.

Its subcellular location is the cytoplasm. It carries out the reaction UDP-N-acetyl-alpha-D-muramate + L-alanine + ATP = UDP-N-acetyl-alpha-D-muramoyl-L-alanine + ADP + phosphate + H(+). Its pathway is cell wall biogenesis; peptidoglycan biosynthesis. Functionally, cell wall formation. This chain is UDP-N-acetylmuramate--L-alanine ligase, found in Caulobacter vibrioides (strain NA1000 / CB15N) (Caulobacter crescentus).